The chain runs to 503 residues: Protein O-glucosyltransferase 3 (503 aa).

The first 19 residues, 1-19 (MQALPLGLQLALLVAAGAG), serve as a signal peptide directing secretion. Residues 19-129 (GARVSAPRSL…VAHSPYILKG (111 aa)) form a Filamin repeat. N-linked (GlcNAc...) asparagine glycosylation is found at N56 and N302. Residues 500 to 503 (REEL) carry the Prevents secretion from ER motif.

The protein belongs to the KDELC family.

Its subcellular location is the endoplasmic reticulum lumen. It carries out the reaction L-seryl-[EGF-like domain protein] + UDP-alpha-D-glucose = 3-O-(beta-D-glucosyl)-L-seryl-[EGF-like domain protein] + UDP + H(+). The enzyme catalyses L-seryl-[EGF-like domain protein] + UDP-alpha-D-xylose = 3-O-(beta-D-xylosyl)-L-seryl-[EGF-like domain protein] + UDP + H(+). It participates in protein modification; protein glycosylation. Protein glucosyltransferase that catalyzes the transfer of glucose from UDP-glucose to a serine residue within the consensus sequence peptide C-X-N-T-X-G-S-F-X-C. Can also catalyze the transfer of xylose from UDP-xylose but less efficiently. Specifically targets extracellular EGF repeats of proteins such as NOTCH1, NOTCH3, FBN1, FBN2 and LTBP1. May regulate the transport of NOTCH1 and NOTCH3 to the plasma membrane and thereby the Notch signaling pathway. The polypeptide is Protein O-glucosyltransferase 3 (Poglut3) (Mus musculus (Mouse)).